A 201-amino-acid polypeptide reads, in one-letter code: MSKRIAGPEIERLIQLLAKVPGLGPRSARRAALHLIKKKEQLLSPLAAAMSEAADKVRICSTCGNVDTADPCMICTDPRRDAGTIIVVEDVSDLWALERAAAMNVRYHVLGGTLSPLDGIGPDQLNIRSLIDRVAGGEVKEIILAVNATVEGQTTAHYLTDQLSGFDIKVTRLAHGVPVGGELDYLDEGTLAAALRSRTAF.

Residues 60-75 (CSTCGNVDTADPCMIC) form a C4-type zinc finger. In terms of domain architecture, Toprim spans 83 to 178 (GTIIVVEDVS…KVTRLAHGVP (96 aa)).

The protein belongs to the RecR family.

In terms of biological role, may play a role in DNA repair. It seems to be involved in an RecBC-independent recombinational process of DNA repair. It may act with RecF and RecO. In Mesorhizobium japonicum (strain LMG 29417 / CECT 9101 / MAFF 303099) (Mesorhizobium loti (strain MAFF 303099)), this protein is Recombination protein RecR.